A 644-amino-acid chain; its full sequence is Biosynthetic arginine decarboxylase (644 aa).

Lysine 113 carries the N6-(pyridoxal phosphate)lysine modification. 293 to 303 contacts substrate; the sequence is FDVGGGLGVDY.

The protein belongs to the Orn/Lys/Arg decarboxylase class-II family. SpeA subfamily. The cofactor is Mg(2+). Pyridoxal 5'-phosphate is required as a cofactor.

It catalyses the reaction L-arginine + H(+) = agmatine + CO2. Catalyzes the biosynthesis of agmatine from arginine. The sequence is that of Biosynthetic arginine decarboxylase from Pasteurella multocida (strain Pm70).